The sequence spans 120 residues: BLOC-1-related complex subunit 8 (120 aa).

Residues 101 to 120 (MNTSAQGHSQEKLSPPPSLA) form a disordered region. Phosphoserine is present on Ser109.

Belongs to the BORCS8 family. In terms of assembly, component of the BLOC-one-related complex (BORC) which is composed of BLOC1S1, BLOC1S2, BORCS5, BORCS6, BORCS7, BORCS8, KXD1 and SNAPIN.

It localises to the lysosome membrane. Its function is as follows. As part of the BLOC-one-related complex (BORC), it plays a role in the movement and localization of lysosomes at the cell periphery. Associated with the cytosolic face of lysosomes, BORC recruits ARL8B to the lysosomal membrane and couples lysosomes to microtubule plus-end-directed kinesin motors, driving lysosome movement toward the cell periphery. In Mus musculus (Mouse), this protein is BLOC-1-related complex subunit 8.